The sequence spans 181 residues: Acireductone dioxygenase (181 aa).

Positions 97, 99, 103, and 141 each coordinate Fe(2+). Ni(2+)-binding residues include His97, His99, Glu103, and His141.

The protein belongs to the acireductone dioxygenase (ARD) family. As to quaternary structure, monomer. It depends on Fe(2+) as a cofactor. Ni(2+) is required as a cofactor.

The enzyme catalyses 1,2-dihydroxy-5-(methylsulfanyl)pent-1-en-3-one + O2 = 3-(methylsulfanyl)propanoate + CO + formate + 2 H(+). It catalyses the reaction 1,2-dihydroxy-5-(methylsulfanyl)pent-1-en-3-one + O2 = 4-methylsulfanyl-2-oxobutanoate + formate + 2 H(+). It participates in amino-acid biosynthesis; L-methionine biosynthesis via salvage pathway; L-methionine from S-methyl-5-thio-alpha-D-ribose 1-phosphate: step 5/6. Catalyzes 2 different reactions between oxygen and the acireductone 1,2-dihydroxy-3-keto-5-methylthiopentene (DHK-MTPene) depending upon the metal bound in the active site. Fe-containing acireductone dioxygenase (Fe-ARD) produces formate and 2-keto-4-methylthiobutyrate (KMTB), the alpha-ketoacid precursor of methionine in the methionine recycle pathway. Ni-containing acireductone dioxygenase (Ni-ARD) produces methylthiopropionate, carbon monoxide and formate, and does not lie on the methionine recycle pathway. The chain is Acireductone dioxygenase from Pseudomonas aeruginosa (strain UCBPP-PA14).